Consider the following 207-residue polypeptide: MTKVAVLKQDGSQAAEIELNDAVFAIEPNNAVITDAVLMQRASLRQGTHAVKNRSAVSGGGRKPWKQKGTGRARAGSIREPQFRGGGIVFGPSPRSYAYRINRKAYQLALKSVLSQKVADNKLVVVDALSFEAPKTQDFKKVLANLSADKKTLVVVDEDNENAILSARNLANVQVMTTKGINVLDVVNADKLVIVQSSIEEIQGGLA.

Residues 49–75 (HAVKNRSAVSGGGRKPWKQKGTGRARA) are disordered.

Belongs to the universal ribosomal protein uL4 family. In terms of assembly, part of the 50S ribosomal subunit.

One of the primary rRNA binding proteins, this protein initially binds near the 5'-end of the 23S rRNA. It is important during the early stages of 50S assembly. It makes multiple contacts with different domains of the 23S rRNA in the assembled 50S subunit and ribosome. Functionally, forms part of the polypeptide exit tunnel. The chain is Large ribosomal subunit protein uL4 from Leuconostoc mesenteroides subsp. mesenteroides (strain ATCC 8293 / DSM 20343 / BCRC 11652 / CCM 1803 / JCM 6124 / NCDO 523 / NBRC 100496 / NCIMB 8023 / NCTC 12954 / NRRL B-1118 / 37Y).